Reading from the N-terminus, the 940-residue chain is Testis-expressed protein 11 (940 aa).

It belongs to the SPO22 family. In terms of assembly, interacts with SYCP2. Interacts with PBXIP1; may prevent interaction between PBXIP1 and ESR2. Interacts with SHOC1. Interacts with REDIC1. Testis-specific. Not expressed in adult ovaries.

The protein localises to the chromosome. Its function is as follows. Regulator of crossing-over during meiosis. Involved in initiation and/or maintenance of chromosome synapsis and formation of crossovers. In Homo sapiens (Human), this protein is Testis-expressed protein 11 (TEX11).